A 55-amino-acid chain; its full sequence is Large ribosomal subunit protein bL33 (55 aa).

Belongs to the bacterial ribosomal protein bL33 family.

This is Large ribosomal subunit protein bL33 from Granulibacter bethesdensis (strain ATCC BAA-1260 / CGDNIH1).